The primary structure comprises 268 residues: Imidazole glycerol phosphate synthase subunit HisF (268 aa).

Active-site residues include Asp-12 and Asp-131.

The protein belongs to the HisA/HisF family. As to quaternary structure, heterodimer of HisH and HisF.

The protein localises to the cytoplasm. It carries out the reaction 5-[(5-phospho-1-deoxy-D-ribulos-1-ylimino)methylamino]-1-(5-phospho-beta-D-ribosyl)imidazole-4-carboxamide + L-glutamine = D-erythro-1-(imidazol-4-yl)glycerol 3-phosphate + 5-amino-1-(5-phospho-beta-D-ribosyl)imidazole-4-carboxamide + L-glutamate + H(+). It participates in amino-acid biosynthesis; L-histidine biosynthesis; L-histidine from 5-phospho-alpha-D-ribose 1-diphosphate: step 5/9. Functionally, IGPS catalyzes the conversion of PRFAR and glutamine to IGP, AICAR and glutamate. The HisF subunit catalyzes the cyclization activity that produces IGP and AICAR from PRFAR using the ammonia provided by the HisH subunit. The polypeptide is Imidazole glycerol phosphate synthase subunit HisF (Chelativorans sp. (strain BNC1)).